The primary structure comprises 78 residues: Dermaseptin-B1 (78 aa).

The N-terminal stretch at Met-1–Cys-22 is a signal peptide. Residues Glu-23–Met-42 constitute a propeptide that is removed on maturation. At Gln-75 the chain carries Glutamine amide. Positions Gly-76–Gln-78 are excised as a propeptide.

The protein belongs to the frog skin active peptide (FSAP) family. Dermaseptin subfamily. In terms of tissue distribution, expressed by the skin glands.

The protein resides in the secreted. Possesses a potent antimicrobial activity against bacteria, fungi and protozoa. Probably acts by disturbing membrane functions with its amphipathic structure. This Phyllomedusa bicolor (Two-colored leaf frog) protein is Dermaseptin-B1.